The primary structure comprises 390 residues: MTNLNPRDVVIVDGVRSAMGKSKNGMFRNVRADSLSAELVRALVARNQFDVNEVEDLIWGCVNQTLEQGMNIGRNIVLLADLPKTVAGQTVNRLCGSSMQAIHTAAAQIATNQGDIFIIGGVEHMGHVGMMHGIDLNPEASKHYAKASNMMGLTAEMLGRMNGIGREEQDAFGVESHRRAWAATQEGRFKNEIVGVEGHDANGFKILCDIDEVIRPDANLEAFKALRPVFDPKGGTVTAATSSALSDGASAMLLMSAERAQALGLKPRAVIRSMAVAGCDAAIMGYGPVPATQKALKRAGLSVADIQTVELNEAFAAQGLSVLKGLGLYEKQDIVNLNGGAIALGHPLGCSGARITTTLLNVMEQQDTQIGLATMCIGLGQGIATVIERV.

Cys95 acts as the Acyl-thioester intermediate in catalysis. Active-site proton acceptor residues include His346 and Cys376.

The protein belongs to the thiolase-like superfamily. Thiolase family. In terms of assembly, heterotetramer of two alpha chains (FadB) and two beta chains (FadA).

It localises to the cytoplasm. The enzyme catalyses an acyl-CoA + acetyl-CoA = a 3-oxoacyl-CoA + CoA. The protein operates within lipid metabolism; fatty acid beta-oxidation. Catalyzes the final step of fatty acid oxidation in which acetyl-CoA is released and the CoA ester of a fatty acid two carbons shorter is formed. This is 3-ketoacyl-CoA thiolase from Acinetobacter baylyi (strain ATCC 33305 / BD413 / ADP1).